The sequence spans 346 residues: tRNA-specific 2-thiouridylase MnmA (346 aa).

An ATP-binding site is contributed by 6–13 (AMSGGTDS). Cys-90 acts as the Nucleophile in catalysis. An intrachain disulfide couples Cys-90 to Cys-187. Residue Gly-114 coordinates ATP. An interaction with tRNA region spans residues 137-139 (KDQ). Cys-187 functions as the Cysteine persulfide intermediate in the catalytic mechanism. The interval 292 to 293 (RY) is interaction with tRNA.

The protein belongs to the MnmA/TRMU family.

It localises to the cytoplasm. The enzyme catalyses S-sulfanyl-L-cysteinyl-[protein] + uridine(34) in tRNA + AH2 + ATP = 2-thiouridine(34) in tRNA + L-cysteinyl-[protein] + A + AMP + diphosphate + H(+). Functionally, catalyzes the 2-thiolation of uridine at the wobble position (U34) of tRNA, leading to the formation of s(2)U34. The chain is tRNA-specific 2-thiouridylase MnmA from Nitratidesulfovibrio vulgaris (strain ATCC 29579 / DSM 644 / CCUG 34227 / NCIMB 8303 / VKM B-1760 / Hildenborough) (Desulfovibrio vulgaris).